The primary structure comprises 221 residues: Protein lethal(2)k10201 (221 aa).

2 consecutive C2H2-type zinc fingers follow at residues Tyr-74 to His-97 and Phe-113 to His-138. The segment at Phe-146–Val-168 is disordered. Basic residues predominate over residues Asn-151–Lys-160.

Its function is as follows. Vital for development. This Drosophila melanogaster (Fruit fly) protein is Protein lethal(2)k10201 (l(2)k10201).